We begin with the raw amino-acid sequence, 124 residues long: Small ribosomal subunit protein bS6m (124 aa).

This sequence belongs to the bacterial ribosomal protein bS6 family. As to quaternary structure, component of the mitochondrial ribosome small subunit (28S) which comprises a 12S rRNA and about 30 distinct proteins.

The protein localises to the mitochondrion. In Bos taurus (Bovine), this protein is Small ribosomal subunit protein bS6m (MRPS6).